Reading from the N-terminus, the 692-residue chain is Zinc finger protein 180 (692 aa).

Residues 72–145 (VNFKIVTVDF…GVKIERFTRD (74 aa)) enclose the KRAB domain. Residues lysine 138, lysine 159, lysine 168, lysine 191, lysine 198, lysine 226, lysine 304, lysine 313, and lysine 330 each participate in a glycyl lysine isopeptide (Lys-Gly) (interchain with G-Cter in SUMO2) cross-link. C2H2-type zinc fingers lie at residues 353-375 (FECNQCGKSFSWSSHLVAHQRTH), 381-403 (YECSECGKSFSRSSHLVSHQRTH), 409-431 (YRCNQCGKSFSQSYVLVVHQRTH), 437-459 (YECNQCGKSFRQSYKLIAHQRTH), 465-487 (YECNQCGKSFIQSYKLIAHQRIH), 493-515 (YECNQCGKSFSQSYKLVAHQRTH), 521-543 (FECNQCGKSFSWSSQLVAHQRTH), 549-571 (YECSECGKSFNRSSHLVMHQRIH), 577-599 (YECNQCGKSFSQSYVLVVHQRTH), 605-627 (YECSQCGKSFRQSSCLTQHQRTH), 633-655 (FECNQCGKTFSLSARLIVHQRTH), and 661-683 (FTCIQCGKAFINSYKLIRHQATH).

It belongs to the krueppel C2H2-type zinc-finger protein family.

Its subcellular location is the nucleus. May be involved in transcriptional regulation. The protein is Zinc finger protein 180 (ZNF180) of Homo sapiens (Human).